The following is a 217-amino-acid chain: MHLQSVARLTRQCHGLPLVELPPPYLAPSLHFSLIRTPVQCSSFSSTAVVGGRGRDLNKTRGVSAIHRTGPRFKLGVSKYPLPKPVSPAALEKREATPDHGLWGFFPRDRSALSTPEYDVAHGRSWSIQELREKSWEDLHCLWWVCVKERNRIATSNLERQRLKAGYGEWEASERDRTIRVTQNGIKHVLRERWYAWEDAKRLYKNGYRPQDEENQE.

The protein belongs to the universal ribosomal protein uL29 family. Component of the mitochondrial large ribosomal subunit. Mature mitochondrial ribosomes consist of a small (37S) and a large (54S) subunit. The 37S subunit contains at least 33 different proteins and 1 molecule of RNA (15S). The 54S subunit contains at least 45 different proteins and 1 molecule of RNA (21S).

Its subcellular location is the mitochondrion. The chain is Large ribosomal subunit protein uL29m (mrpl4) from Neosartorya fischeri (strain ATCC 1020 / DSM 3700 / CBS 544.65 / FGSC A1164 / JCM 1740 / NRRL 181 / WB 181) (Aspergillus fischerianus).